Here is a 1244-residue protein sequence, read N- to C-terminus: MNNQKVVAVLLQECKQVLDQLLLEAPDVSEEDKSEDQRCRALLPSELRTLIQEAKEMKWPFVPEKWQYKQAVGPEDKTNLKDVIGAGLQQLLASLRASILARDCAAAAAIVFLVDRFLYGLDVSGKLLQVAKGLHKLQPATPIAPQVVIRQARISVNSGKLLKAEYILSSLISNNGATGTWLYRNESDKVLVQSVCIQIRGQILQKLGMWYEAAELIWASIVGYLALPQPDKKGLSTSLGILADIFVSMSKNDYEKFKNNPQINLSLLKEFDHHLLSAAEACKLAAAFSAYTPLFVLTAVNIRGTCLLSYSSSNDCPPELKNLHLCEAKEAFEIGLLTKRDDEPVTGKQELHSFVKAAFGLTTVHRRLHGETGTVHAASQLCKEAMGKLYNFSTSSRSQDREALSQEVMSVIAQVKEHLQVQSFSNVDDRSYVPESFECRLDKLILHGQGDFQKILDTYSQHHTSVCEVFESDCGNNKNEQKDAKTGVCITALKTEIKNIDTVSTTQEKPHCQRDTGISSSLMGKNVQRELRRGGRRNWTHSDAFRVSLDQDVETETEPSDYSNGEGAVFNKSLSGSQTSSAWSNLSGFSSSASWEEVNYHVDDRSARKEPGKEHLVDTQCSTALSEELENDREGRAMHSLHSQLHDLSLQEPNNDNLEPSQNQPQQQMPLTPFSPHNTPGIFLAPGAGLLEGAPEGIQEVRNMGPRNTSAHSRPSYRSASWSSDSGRPKNMGTHPSVQKEEAFEIIVEFPETNCDVKDRQGKEQGEEISERGAGPTFKASPSWVDPEGETAESTEDAPLDFHRVLHNSLGNISMLPCSSFTPNWPVQNPDSRKSGGPVAEQGIDPDASTVDEEGQLLDSMDVPCTNGHGSHRLCILRQPPGQRAETPNSSVSGNILFPVLSEDCTTTEEGNQPGNMLNCSQNSSSSSVWWLKSPAFSSGSSEGDSPWSYLNSSGSSWVSLPGKMRKEILEARTLQPDDFEKLLAGVRHDWLFQRLENTGVFKPSQLHRAHSALLLKYSKKSELWTAQETIVYLGDYLTVKKKGRQRNAFWVHHLHQEEILGRYVGKDYKEQKGLWHHFTDVERQMTAQHYVTEFNKRLYEQNIPTQIFYIPSTILLILEDKTIKGCISVEPYILGEFVKLSNNTKVVKTEYKATEYGLAYGHFSYEFSNHRDVVVDLQGWVTGNGKGLIYLTDPQIHSVDQKVFTTNFGKRGIFYFFNNQHVECNEICHRLSLTRPSMEKPCT.

ADP-D-glycero-beta-D-manno-heptose-binding positions include Phe61, Gln67, Arg116, 150–153 (RQAR), Asp231, Lys233, 236–237 (ST), and Phe295. 4 disordered regions span residues 650–675 (LQEP…TPFS), 701–737 (VRNM…THPS), 757–798 (VKDR…TEDA), and 824–848 (NWPV…DPDA). Residues 652–675 (EPNNDNLEPSQNQPQQQMPLTPFS) are compositionally biased toward polar residues. Over residues 713-726 (SRPSYRSASWSSDS) the composition is skewed to low complexity. Residues 757-771 (VKDRQGKEQGEEISE) are compositionally biased toward basic and acidic residues. The span at 787–798 (PEGETAESTEDA) shows a compositional bias: acidic residues. The Alpha-type protein kinase domain maps to 1017 to 1237 (KYSKKSELWT…ICHRLSLTRP (221 aa)).

This sequence belongs to the protein kinase superfamily. Alpha-type protein kinase family. ALPK subfamily. In terms of tissue distribution, highly expressed in liver. Expressed in the optic nerve and retinal pigmented epithelium. Lower expression is observed in the macula and extramacular retina.

Its subcellular location is the cytoplasm. It localises to the cytosol. It is found in the cytoskeleton. The protein localises to the spindle pole. The protein resides in the microtubule organizing center. Its subcellular location is the centrosome. It localises to the cell projection. It is found in the cilium. It carries out the reaction L-seryl-[protein] + ATP = O-phospho-L-seryl-[protein] + ADP + H(+). The catalysed reaction is L-threonyl-[protein] + ATP = O-phospho-L-threonyl-[protein] + ADP + H(+). With respect to regulation, serine/threonine-protein kinase activity is stimulated upon ADP-D-glycero-beta-D-manno-heptose (ADP-Heptose)-binding. Functionally, serine/threonine-protein kinase that detects bacterial pathogen-associated molecular pattern metabolites (PAMPs) and initiates an innate immune response, a critical step for pathogen elimination and engagement of adaptive immunity. Specifically recognizes and binds ADP-D-glycero-beta-D-manno-heptose (ADP-Heptose), a potent PAMP present in all Gram-negative and some Gram-positive bacteria. ADP-Heptose-binding stimulates its kinase activity to phosphorylate and activate TIFA, triggering pro-inflammatory NF-kappa-B signaling. May be involved in monosodium urate monohydrate (MSU)-induced inflammation by mediating phosphorylation of unconventional myosin MYO9A. May also play a role in apical protein transport by mediating phosphorylation of unconventional myosin MYO1A. May play a role in ciliogenesis. The sequence is that of Alpha-protein kinase 1 from Homo sapiens (Human).